The sequence spans 155 residues: Endoribonuclease YbeY (155 aa).

Zn(2+) contacts are provided by H110, H114, and H120.

The protein belongs to the endoribonuclease YbeY family. The cofactor is Zn(2+).

It is found in the cytoplasm. Functionally, single strand-specific metallo-endoribonuclease involved in late-stage 70S ribosome quality control and in maturation of the 3' terminus of the 16S rRNA. This Deinococcus geothermalis (strain DSM 11300 / CIP 105573 / AG-3a) protein is Endoribonuclease YbeY.